The following is a 563-amino-acid chain: Cytochrome P450 monooxygenase efuG (563 aa).

A helical transmembrane segment spans residues 10–30; the sequence is ITSHQWGIGSVFLLISIPLIV. The interval 462–482 is disordered; that stretch reads PDDPQSGPRKDAKKQKAKSDG. Cys505 lines the heme pocket.

It belongs to the cytochrome P450 family. Heme serves as cofactor.

It is found in the membrane. It functions in the pathway secondary metabolite biosynthesis; terpenoid biosynthesis. In terms of biological role, cytochrome P450 monooxygenase; part of the gene cluster that mediates the biosynthesis of enfumafungin, a glycosylated fernene-type triterpenoid with potent antifungal activity, mediated by its interaction with beta-1,3-glucan synthase and the fungal cell wall. The pathway begins with the terpene cyclase-glycosyl transferase fusion protein that most likely uses 2,3-oxidosqualene as substrate and catalyzes glycosylation immediately after cyclization. The fernene glycoside then could be processed by the desaturase efuI which catalyzes isomerization of a double bond established by efuA to form the core structure. The latter would then undergo a series of hydroxylations in unknown order at C-2, C-19, C-23 and C-25, which would be catalyzed by two of the three cytochrome P450 monooxygenases efuB, efuG or efuH. The hydroxy-group at C-25 becomes oxidized by the dehydrogenase efuE to enable a spontaneous, non-enzymatic hemiacetal formation with C-23. After hydroxylation at C-2, acetylation by the acetyltransferase efuC takes place. The final steps in enfumafungin biosynthesis require expansion of the 5-membered ring by lactonization via a Baeyer-Villiger reaction mediated by one of the BGC's cytochrome P450 monooxygenases (efuB, efuG or efuH) followed by ring cleavage. This type of reaction would establish a double bond between C-20 and C-21 which could be reduced by the reductase efuL to form the final product. The sequence is that of Cytochrome P450 monooxygenase efuG from Hormonema carpetanum.